The primary structure comprises 224 residues: tRNA (guanine-N(7)-)-methyltransferase (224 aa).

Glu54, Glu79, Glu106, and Asp129 together coordinate S-adenosyl-L-methionine. The active site involves Asp129. Residues Lys133 and Asp165 each contribute to the substrate site.

It belongs to the class I-like SAM-binding methyltransferase superfamily. TrmB family.

The catalysed reaction is guanosine(46) in tRNA + S-adenosyl-L-methionine = N(7)-methylguanosine(46) in tRNA + S-adenosyl-L-homocysteine. It functions in the pathway tRNA modification; N(7)-methylguanine-tRNA biosynthesis. In terms of biological role, catalyzes the formation of N(7)-methylguanine at position 46 (m7G46) in tRNA. This Chlamydia caviae (strain ATCC VR-813 / DSM 19441 / 03DC25 / GPIC) (Chlamydophila caviae) protein is tRNA (guanine-N(7)-)-methyltransferase.